A 961-amino-acid polypeptide reads, in one-letter code: MEVAAVSATSRPLSPLLSTAPARRLRLLPPRCVFGRRLRASPRTRASVEPATQELGTAGAGEWSGDAIRRRFLEFYAARGHKILPSSSLVPDDPTVLLTIAGMLQFKPIFLGKEPRRVPCATTSQKCIRTNDIENVGRTARHQTFFEMLGNFSFGDYFKKEATAWAWELATKEYGLPAERLWISVFEDDNEAFDIWHNEVGVPKERIKRMGAEDNFWTSGATGPCGPCSEIYYDFYPERGSSDADLGDDSRFIEFYNLVFMQYNKKDDGSLEPLKQKNIDTGMGLERMARILQKVPNNYETDLIFPIIEKAASMAMVSYAKTDDATKTNLKIIGDHMRAVVYLVSDGVIPSNIGRGYVVRRLIRRVVRMGRLIGIRGDGHGNSEGAFLPSLAEVVISLSTEIDPDVESRRRSILGELQREELRFVQTLERGEKLLDELLDGAVLSAGNNGDKPSLSGKDLFLLYDTYGFPVEITAEIASERGVTVDIEGFDIEMENQRKQSQAAHNVVKLSVGNETEIIKSIPDTVFLGYDSLSASAVVRGLLVNGNPVNEVSEGSEVEILLDRTPFYAESGGQVGDNGFLYVNGGEDRSQAAVIEINDVQKSLGNIFVHKGTIKQGSVEVGKEVDACVDAKLRQGAKAHHTATHLLQSALKSVVGSETSQAGSLVAFDRLRFDFNFHRPVSEGELTRIELLVNQWISNAAHLETKVMALQDAKNAGAIAMFGEKYGEQVRVVEVPGVSLELCGGTHVSNTAEIRGFKIISEQGIASGIRRIEAVAGDAFIDYVCARDNYMRRLCSSLKVKAEDVNGRVETILEELRATRNEVSSLRSKIAVLKAASLASKATTVEPQNVRIVVENMGDVDADGLKSAAEYLIGTLQDPAAVILGSSPGDGKVSLVAAFSPAVVKMGLQAGKFVGGIAKLCGGGGGGKPNFAQAGGRKPENLPDALEKARAEIVAGVSSSS.

Positions 641, 645, 743, and 747 each coordinate Zn(2+).

Belongs to the class-II aminoacyl-tRNA synthetase family. As to quaternary structure, monomer. Requires Zn(2+) as cofactor.

The protein localises to the plastid. It is found in the chloroplast. It localises to the mitochondrion. The catalysed reaction is tRNA(Ala) + L-alanine + ATP = L-alanyl-tRNA(Ala) + AMP + diphosphate. Its function is as follows. Catalyzes the attachment of alanine to tRNA(Ala) in a two-step reaction: alanine is first activated by ATP to form Ala-AMP and then transferred to the acceptor end of tRNA(Ala). Also edits incorrectly charged tRNA(Ala) via its editing domain. The chain is Alanine--tRNA ligase, chloroplastic/mitochondrial from Sorghum bicolor (Sorghum).